The primary structure comprises 364 residues: Methylthioribose-1-phosphate isomerase (364 aa).

Substrate contacts are provided by residues Arg-49 to Ala-51, Arg-89, and Gln-201. The active-site Proton donor is Asp-242. Position 252-253 (Asn-252–Lys-253) interacts with substrate.

It belongs to the eIF-2B alpha/beta/delta subunits family. MtnA subfamily.

The catalysed reaction is 5-(methylsulfanyl)-alpha-D-ribose 1-phosphate = 5-(methylsulfanyl)-D-ribulose 1-phosphate. It functions in the pathway amino-acid biosynthesis; L-methionine biosynthesis via salvage pathway; L-methionine from S-methyl-5-thio-alpha-D-ribose 1-phosphate: step 1/6. Its function is as follows. Catalyzes the interconversion of methylthioribose-1-phosphate (MTR-1-P) into methylthioribulose-1-phosphate (MTRu-1-P). The sequence is that of Methylthioribose-1-phosphate isomerase from Leptospira interrogans serogroup Icterohaemorrhagiae serovar copenhageni (strain Fiocruz L1-130).